Reading from the N-terminus, the 335-residue chain is DNA-directed RNA polymerase subunit alpha (335 aa).

The alpha N-terminal domain (alpha-NTD) stretch occupies residues 1–233; it reads MVREKITVST…DLFIPFLHME (233 aa). The alpha C-terminal domain (alpha-CTD) stretch occupies residues 265 to 335; the sequence is KEIALKSIFI…KQLVIFLPKK (71 aa).

The protein belongs to the RNA polymerase alpha chain family. In terms of assembly, in plastids the minimal PEP RNA polymerase catalytic core is composed of four subunits: alpha, beta, beta', and beta''. When a (nuclear-encoded) sigma factor is associated with the core the holoenzyme is formed, which can initiate transcription.

It is found in the plastid. The protein localises to the chloroplast. It catalyses the reaction RNA(n) + a ribonucleoside 5'-triphosphate = RNA(n+1) + diphosphate. Its function is as follows. DNA-dependent RNA polymerase catalyzes the transcription of DNA into RNA using the four ribonucleoside triphosphates as substrates. The chain is DNA-directed RNA polymerase subunit alpha from Coffea arabica (Arabian coffee).